Reading from the N-terminus, the 427-residue chain is Acetyl-CoA acetyltransferase, mitochondrial (427 aa).

The transit peptide at 1–33 (MAVLAALLRSGARSRSPLLRRLVQEIRYVERSY) directs the protein to the mitochondrion. The residue at position 66 (Lys66) is an N6-acetyllysine; alternate. Lys66 is subject to N6-succinyllysine; alternate. An N6-succinyllysine modification is found at Lys78. Catalysis depends on Cys126, which acts as the Acyl-thioester intermediate. Residues Lys174, Lys181, Lys190, and Lys202 each carry the N6-acetyllysine; alternate modification. Lys174, Lys181, Lys190, and Lys202 each carry N6-succinyllysine; alternate. Residue Tyr219 coordinates CoA. Tyr219 is a binding site for K(+). Residues Lys223 and Lys230 each carry the N6-acetyllysine; alternate modification. N6-succinyllysine; alternate occurs at positions 223 and 230. Lys243 carries the N6-succinyllysine modification. Residues Lys251 and Lys257 each carry the N6-acetyllysine modification. CoA-binding positions include 258–260 (RVD) and Lys263. Position 263 is an N6-acetyllysine; alternate (Lys263). N6-succinyllysine; alternate is present on Lys263. Lys266 and Lys268 each carry N6-succinyllysine. At Lys273 the chain carries N6-acetyllysine. Residues Ala280, Ala281, and Ala283 each contribute to the K(+) site. A CoA-binding site is contributed by Ser284. Lys338 carries the post-translational modification N6-acetyllysine. Val381 is a K(+) binding site. Cys413 serves as the catalytic Proton donor/acceptor.

Belongs to the thiolase-like superfamily. Thiolase family. As to quaternary structure, homotetramer. Post-translationally, succinylation at Lys-268, adjacent to a coenzyme A binding site. Desuccinylated by SIRT5.

It localises to the mitochondrion. It carries out the reaction 2 acetyl-CoA = acetoacetyl-CoA + CoA. The enzyme catalyses propanoyl-CoA + acetyl-CoA = 2-methyl-3-oxobutanoyl-CoA + CoA. It participates in lipid metabolism; fatty acid beta-oxidation. Activated by potassium ions, but not sodium ions. Functionally, this is one of the enzymes that catalyzes the last step of the mitochondrial beta-oxidation pathway, an aerobic process breaking down fatty acids into acetyl-CoA. Using free coenzyme A/CoA, catalyzes the thiolytic cleavage of medium- to long-chain 3-oxoacyl-CoAs into acetyl-CoA and a fatty acyl-CoA shortened by two carbon atoms. The activity of the enzyme is reversible and it can also catalyze the condensation of two acetyl-CoA molecules into acetoacetyl-CoA. Thereby, it plays a major role in ketone body metabolism. The protein is Acetyl-CoA acetyltransferase, mitochondrial (ACAT1) of Homo sapiens (Human).